The chain runs to 306 residues: 4-diphosphocytidyl-2-C-methyl-D-erythritol kinase (306 aa).

The active site involves Lys23. An ATP-binding site is contributed by 108–118 (PIAAGIGGGSA). The active site involves Asp150.

The protein belongs to the GHMP kinase family. IspE subfamily.

It catalyses the reaction 4-CDP-2-C-methyl-D-erythritol + ATP = 4-CDP-2-C-methyl-D-erythritol 2-phosphate + ADP + H(+). The protein operates within isoprenoid biosynthesis; isopentenyl diphosphate biosynthesis via DXP pathway; isopentenyl diphosphate from 1-deoxy-D-xylulose 5-phosphate: step 3/6. Its function is as follows. Catalyzes the phosphorylation of the position 2 hydroxy group of 4-diphosphocytidyl-2C-methyl-D-erythritol. In Rhodopseudomonas palustris (strain BisB18), this protein is 4-diphosphocytidyl-2-C-methyl-D-erythritol kinase.